Consider the following 857-residue polypeptide: Zinc finger protein 574 (857 aa).

C2H2-type zinc fingers lie at residues 15-37 (YVCSECGEEYPSLEEALEHQQSH), 58-80 (YQCLECGLLLRTPEDLLAHQELH), 99-121 (YECPECKALFNSQDVWMAHRYTH), 206-228 (YKCSECTQLFQTPGEFLEHQGTH), 297-319 (FSCGDCSETFQTTKDLEEHQISH), 324-346 (FSCPLCSKVFPTYPEVGEHLKSH), 352-374 (YLCVDCGLAFVSEAVLLNHRRSH), 380-401 (FTCECGLTFLNMTRFLYHRRVH), 428-451 (FHCDPCGKDFPLLSQFLRHQRFVH), 457-479 (HKCPTCGKHFKKGSHLRTHMLTH), 485-507 (YSCTVCSKSFNSQANLLRHRLTH), 513-535 (YKCQLCGKAFSQSSTLQQHQYVH), 541-563 (YKCNECGINFHRPYRLLLHQYHH), and 569-591 (YKCQDCGLSFLLKRLLEVHQLGH). Residues 597–619 (HRCRECGTNFPSVQRLQDHRCSK) form a C2H2-type 15; degenerate zinc finger. 5 C2H2-type zinc fingers span residues 628–651 (LECPICGKKVTSDAHLNTHVAAQH), 681–703 (LECSDCHKTFSTETSLQVHRRIH), 709–731 (YPCPDCGKAFRQSTHLKDHRRLH), 737–759 (FKCDVCGKAFTIAVRLSEHKRIH), and 765–787 (HSCPDCGRAYRSFSNLWKHRKLH). Positions 648 to 678 (AAQHSGNKRSNVSSGKGTPVLPRNKLKGGGG) are disordered. Residues 651-663 (HSGNKRSNVSSGK) are compositionally biased toward polar residues.

The protein belongs to the krueppel C2H2-type zinc-finger protein family.

Its subcellular location is the nucleus. May be involved in transcriptional regulation. The polypeptide is Zinc finger protein 574 (znf574) (Xenopus tropicalis (Western clawed frog)).